A 57-amino-acid polypeptide reads, in one-letter code: UPF0509 protein YciZ (57 aa).

The protein belongs to the UPF0509 family.

This is UPF0509 protein YciZ (yciZ) from Escherichia coli O157:H7.